The following is a 540-amino-acid chain: Glucose-6-phosphate isomerase (540 aa).

Residue Glu-350 is the Proton donor of the active site. Active-site residues include His-381 and Lys-503.

Belongs to the GPI family.

The protein resides in the cytoplasm. It catalyses the reaction alpha-D-glucose 6-phosphate = beta-D-fructose 6-phosphate. It participates in carbohydrate biosynthesis; gluconeogenesis. It functions in the pathway carbohydrate degradation; glycolysis; D-glyceraldehyde 3-phosphate and glycerone phosphate from D-glucose: step 2/4. Catalyzes the reversible isomerization of glucose-6-phosphate to fructose-6-phosphate. This chain is Glucose-6-phosphate isomerase, found in Paraburkholderia phymatum (strain DSM 17167 / CIP 108236 / LMG 21445 / STM815) (Burkholderia phymatum).